The sequence spans 35 residues: Mu/omega-theraphotoxin-Tap1a (35 aa).

3 disulfide bridges follow: cysteine 3/cysteine 18, cysteine 10/cysteine 23, and cysteine 17/cysteine 30.

It belongs to the neurotoxin 10 (Hwtx-1) family. 59 (Tltx) subfamily. As to expression, expressed by the venom gland.

The protein localises to the secreted. Functionally, gating-modifier toxin that inhibits both sodium (Nav) and calcium (Cav3) channels by inducing hyperpolarizing shift in voltage-dependence of activation and steady state inactivation. Inhibits Nav1.1/SCN1A, Nav1.2/SCN2A, Nav1.3/SCN3A, Nav1.6/SCN6A, Nav1.7/SCN9A and Cav3.1/CACNA1G sodium and calcium channels at nanomolar concentrations (IC(50)=81-301 nM). Surprisingly, selectively slows fast inactivation of Nav1.3/SCN3A. Also shows moderate inhibition of Cav3.2/CACNA1H calcium channels (IC(50)=1233 nM). Ex vivo, nearly ablates neuronal mechanosensitivity in afferent fibers innervating the colon and the bladder. In vivo, in a mouse model of irritable bowel syndrome, intracolonic administration of the toxin reverses colonic mechanical hypersensitivity. The chain is Mu/omega-theraphotoxin-Tap1a from Theraphosa apophysis (Goliath pinkfoot tarantula).